The following is a 480-amino-acid chain: Sialyltransferase-like protein 5 (480 aa).

Residues 1-17 (MARAPPPLSSLPPPPRR) are Cytoplasmic-facing. A signal-anchor for type II membrane protein transmembrane segment spans residues 18-38 (PTVVLLLGLALAFCLAVLSIQ). Residues 39–480 (SSFFTAPRLA…VCVRHERSSS (442 aa)) are Lumenal-facing. N-linked (GlcNAc...) asparagine glycans are attached at residues Asn98, Asn130, Asn165, and Asn321.

Belongs to the glycosyltransferase 29 family.

It is found in the golgi apparatus membrane. In terms of biological role, may possess sialyltransferase-like activity in vitro. This is Sialyltransferase-like protein 5 from Oryza sativa subsp. japonica (Rice).